The primary structure comprises 175 residues: MSILPIVTAPDERLKQKSQPVLEFTDQTRKFMDDMLKTMYHEDGAGLAAVQVGVLKRILVIDIQDHDSVARPKDFYPLFIVNPEIIEKAEELVTANEGCISLPEQRIEVARPESIKIRYLDYHGKSRELKANDWLARVIQHEYDHLEGKLMIDYLSNLKRDVVLRKLKKLKNNIV.

The Fe cation site is built by Cys99 and His141. The active site involves Glu142. His145 is a binding site for Fe cation.

This sequence belongs to the polypeptide deformylase family. Fe(2+) serves as cofactor.

It carries out the reaction N-terminal N-formyl-L-methionyl-[peptide] + H2O = N-terminal L-methionyl-[peptide] + formate. Removes the formyl group from the N-terminal Met of newly synthesized proteins. Requires at least a dipeptide for an efficient rate of reaction. N-terminal L-methionine is a prerequisite for activity but the enzyme has broad specificity at other positions. In Rickettsia conorii (strain ATCC VR-613 / Malish 7), this protein is Peptide deformylase 1.